The primary structure comprises 221 residues: Carotenogenesis protein CarR (221 aa).

Transmembrane regions (helical) follow at residues 56 to 76 (LGLLAAVVLLAVGAVTGPLLL), 79 to 99 (APLLAMLVGTSAVCAWGALSP), 107 to 127 (LGVGLAVVSAAALVLARGAPH), 136 to 156 (VCTVSHLAIGVVPLVVALFAL), 166 to 186 (AVVAGLSVGSTGALLGELACE), and 191 to 211 (HVLSHHLLAWVVITVVLVVIS).

It localises to the cell inner membrane. In terms of biological role, negative regulator of the carotenoid synthesis regulon. It is probably inactivated by protoporphyrin IX in the presence of blue light. Inactivation of CarR leads to loss of negative control over the carotenogenesis protein CarQ. The protein is Carotenogenesis protein CarR (carR) of Myxococcus xanthus.